We begin with the raw amino-acid sequence, 8892 residues long: Nonribosomal peptide synthetase 32 (8892 aa).

A Carrier 1 domain is found at 12–85 (EPSKLVLGRV…QLAESIAQQN (74 aa)). S46 is subject to O-(pantetheine 4'-phosphoryl)serine. The interval 88-112 (AGNGVNGHANGNGMNGNGLHNEATI) is disordered. Over residues 93 to 108 (NGHANGNGMNGNGLHN) the composition is skewed to low complexity. The condensation 1 stretch occupies residues 567–956 (PTSANVPRRV…EGVDLSVRDF (390 aa)). The adenylation 1 stretch occupies residues 989 to 1386 (KMAEQPEALA…GRIDSQIKIR (398 aa)). In terms of domain architecture, Carrier 2 spans 1523-1599 (ISATAVEREL…ELAAEVQATQ (77 aa)). An O-(pantetheine 4'-phosphoryl)serine modification is found at S1560. The epimerization 1 stretch occupies residues 1609 to 2039 (GAIALSPIQQ…YGQTVKSLVN (431 aa)). The interval 2083–2518 (EDILPCSPIQ…LLLPAEEAKL (436 aa)) is condensation 2. The adenylation 2 stretch occupies residues 2543 to 2934 (SQPEALAVSA…GRRDTQVKIR (392 aa)). The region spanning 3061–3137 (SSATPIEREL…ELAANSQTGR (77 aa)) is the Carrier 3 domain. At S3098 the chain carries O-(pantetheine 4'-phosphoryl)serine. Residues 3153–3590 (LSPIQQMFFD…GDTVKTLVEE (438 aa)) are epimerization 2. Positions 3634–4061 (EDILPCSAIQ…NVDRPLRELT (428 aa)) are condensation 3. Residues 4098 to 4488 (TLPEALAISS…GRIDSQIKIR (391 aa)) form an adenylation 3 region. One can recognise a Carrier 4 domain in the interval 4627–4703 (APTTDLERKL…DLSRVVEEKC (77 aa)). S4664 carries the O-(pantetheine 4'-phosphoryl)serine modification. The tract at residues 4760–5181 (EDVYPCSPMQ…LLTDEDCDQL (422 aa)) is condensation 4. The adenylation 4 stretch occupies residues 5205–5605 (TSYPTAPAIS…GRRDTQVKIR (401 aa)). The Carrier 5 domain occupies 5745 to 5821 (MPTTPMEQKL…DLAEAMEEKG (77 aa)). S5782 is modified (O-(pantetheine 4'-phosphoryl)serine). The tract at residues 5868–6285 (EDVYPCSPLQ…LLSPGQMAQI (418 aa)) is condensation 5. Residues 6307–6700 (QMTTRPAATA…GRIDTQIKIR (394 aa)) are adenylation 5. The Carrier 6 domain maps to 6834–6911 (ELTTTIERQL…ELATQTQTTE (78 aa)). Residue S6872 is modified to O-(pantetheine 4'-phosphoryl)serine. An epimerization 3 region spans residues 6923–7360 (NFQLSPIQQM…SYSCAIESLV (438 aa)). The interval 7403–7834 (VQDILPCSPI…LLPAGDANQI (432 aa)) is condensation 6. Residues 7855-8253 (QQMAAHPTAQ…LDRIGTQVKI (399 aa)) are adenylation 6. The 77-residue stretch at 8380–8456 (APVGRNEEIL…AMAARVTADI (77 aa)) folds into the Carrier 7 domain. S8417 carries the O-(pantetheine 4'-phosphoryl)serine modification. The condensation 7 stretch occupies residues 8490–8878 (HFAFDATGPC…EIIEDSGCNV (389 aa)).

It belongs to the NRP synthetase family.

It functions in the pathway secondary metabolite biosynthesis. Nonribosomal peptide synthetase; part of the gene cluster that mediates the biosynthesis of the lipopeptides W493 A and B. W493 A and B consist of six amino acid residues D-allo-thr, L-Ala, D-Ala, L-Gln, D-Tyr, and L-Val/L-Ile linked to a 3-hydroxy-4-methyltetradecanoic acid polyketide chain. The biosynthesis starts with formation of the linear polyketide chain by the highly reducing polyketide synthase PKS40. The gene cluster contains a putative acyl-CoA ligase (FPSE_09184) for formation of a CoA thioester polyketide. The thiol bond could be hydrolyzed by the putative thioesterase (FPSE_09186) and then accepted by the first T domain in module 1 of NRPS32. The second T domain is responsible for accepting a threonine, which is adenylated by the A domain and epimerized to the D-allo-threonine formed by the E domain. The five successive modules incorporate Ala, Ala, Gln, Tyr, and Val/Ile into the final product, which is released by cyclization. The polypeptide is Nonribosomal peptide synthetase 32 (Fusarium pseudograminearum (strain CS3096) (Wheat and barley crown-rot fungus)).